We begin with the raw amino-acid sequence, 476 residues long: Inosine-5'-monophosphate dehydrogenase (476 aa).

CBS domains are found at residues 93–151 and 152–211; these read IIRD…VKDI and MTKD…TRDE. NAD(+) is bound by residues aspartate 242 and 292-294; that span reads GIG. K(+) is bound by residues glycine 294 and glycine 296. Serine 297 is an IMP binding site. Cysteine 299 is a binding site for K(+). Catalysis depends on cysteine 299, which acts as the Thioimidate intermediate. Residues 334 to 336, 357 to 358, and 381 to 385 each bind IMP; these read DGG, GY, and YRGMG. Catalysis depends on arginine 398, which acts as the Proton acceptor. Position 408 (glutamate 408) interacts with IMP. Glutamate 462 is a K(+) binding site.

This sequence belongs to the IMPDH/GMPR family. In terms of assembly, homotetramer. K(+) is required as a cofactor.

It carries out the reaction IMP + NAD(+) + H2O = XMP + NADH + H(+). Its pathway is purine metabolism; XMP biosynthesis via de novo pathway; XMP from IMP: step 1/1. With respect to regulation, mycophenolic acid (MPA) is a non-competitive inhibitor that prevents formation of the closed enzyme conformation by binding to the same site as the amobile flap. In contrast, mizoribine monophosphate (MZP) is a competitive inhibitor that induces the closed conformation. MPA is a potent inhibitor of mammalian IMPDHs but a poor inhibitor of the bacterial enzymes. MZP is a more potent inhibitor of bacterial IMPDH. In terms of biological role, catalyzes the conversion of inosine 5'-phosphate (IMP) to xanthosine 5'-phosphate (XMP), the first committed and rate-limiting step in the de novo synthesis of guanine nucleotides, and therefore plays an important role in the regulation of cell growth. This is Inosine-5'-monophosphate dehydrogenase from Korarchaeum cryptofilum (strain OPF8).